Here is a 293-residue protein sequence, read N- to C-terminus: Shikimate dehydrogenase (NADP(+)) (293 aa).

Residues 20–22 (SLT) and T72 each bind shikimate. K76 (proton acceptor) is an active-site residue. Shikimate contacts are provided by N97 and D112. NADP(+) contacts are provided by residues 136-140 (GAGGA) and I230. Y232 is a binding site for shikimate. Position 253 (G253) interacts with NADP(+).

It belongs to the shikimate dehydrogenase family. In terms of assembly, homodimer.

It catalyses the reaction shikimate + NADP(+) = 3-dehydroshikimate + NADPH + H(+). It participates in metabolic intermediate biosynthesis; chorismate biosynthesis; chorismate from D-erythrose 4-phosphate and phosphoenolpyruvate: step 4/7. Its function is as follows. Involved in the biosynthesis of the chorismate, which leads to the biosynthesis of aromatic amino acids. Catalyzes the reversible NADPH linked reduction of 3-dehydroshikimate (DHSA) to yield shikimate (SA). This Pseudarthrobacter chlorophenolicus (strain ATCC 700700 / DSM 12829 / CIP 107037 / JCM 12360 / KCTC 9906 / NCIMB 13794 / A6) (Arthrobacter chlorophenolicus) protein is Shikimate dehydrogenase (NADP(+)).